A 1845-amino-acid chain; its full sequence is Proteasome activator complex subunit 4 (1845 aa).

The segment covering methionine 1–leucine 13 has biased composition (basic and acidic residues). The disordered stretch occupies residues methionine 1 to phenylalanine 26. HEAT repeat units lie at residues proline 475–cysteine 519 and asparagine 1000–glycine 1039. A Phosphoserine modification is found at serine 1123. HEAT repeat units follow at residues arginine 1181–arginine 1219 and aspartate 1356–histidine 1394. Serine 1616 carries the post-translational modification Phosphoserine. HEAT repeat units lie at residues proline 1638 to phenylalanine 1676 and glutamate 1682 to leucine 1720. The bromodomain-like (BRDL) stretch occupies residues alanine 1652–lysine 1740.

Belongs to the BLM10 family. As to quaternary structure, homodimer. Component of the spermatoproteasome, a form of the proteasome specifically found in testis. Interacts with the 20S and 26S proteasomes. In terms of processing, phosphorylated.

Its subcellular location is the cytoplasm. It is found in the cytosol. It localises to the nucleus. The protein resides in the nucleus speckle. In terms of biological role, associated component of the proteasome that specifically recognizes acetylated histones and promotes ATP- and ubiquitin-independent degradation of core histones during spermatogenesis and DNA damage response. Recognizes and binds acetylated histones via its bromodomain-like (BRDL) region and activates the proteasome by opening the gated channel for substrate entry. Binds to the core proteasome via its C-terminus, which occupies the same binding sites as the proteasomal ATPases, opening the closed structure of the proteasome via an active gating mechanism. Component of the spermatoproteasome, a form of the proteasome specifically found in testis: binds to acetylated histones and promotes degradation of histones, thereby participating actively to the exchange of histones during spermatogenesis. Also involved in DNA damage response in somatic cells, by promoting degradation of histones following DNA double-strand breaks. The polypeptide is Proteasome activator complex subunit 4 (PSME4) (Bos taurus (Bovine)).